The sequence spans 511 residues: Bifunctional purine biosynthesis protein PurH (511 aa).

The MGS-like domain maps to 1 to 145 (MKKRALVSVS…KNHKFVSVIV (145 aa)).

Belongs to the PurH family.

The catalysed reaction is (6R)-10-formyltetrahydrofolate + 5-amino-1-(5-phospho-beta-D-ribosyl)imidazole-4-carboxamide = 5-formamido-1-(5-phospho-D-ribosyl)imidazole-4-carboxamide + (6S)-5,6,7,8-tetrahydrofolate. The enzyme catalyses IMP + H2O = 5-formamido-1-(5-phospho-D-ribosyl)imidazole-4-carboxamide. The protein operates within purine metabolism; IMP biosynthesis via de novo pathway; 5-formamido-1-(5-phospho-D-ribosyl)imidazole-4-carboxamide from 5-amino-1-(5-phospho-D-ribosyl)imidazole-4-carboxamide (10-formyl THF route): step 1/1. It participates in purine metabolism; IMP biosynthesis via de novo pathway; IMP from 5-formamido-1-(5-phospho-D-ribosyl)imidazole-4-carboxamide: step 1/1. In Bacillus cereus (strain ATCC 14579 / DSM 31 / CCUG 7414 / JCM 2152 / NBRC 15305 / NCIMB 9373 / NCTC 2599 / NRRL B-3711), this protein is Bifunctional purine biosynthesis protein PurH.